A 235-amino-acid polypeptide reads, in one-letter code: Transmembrane protein 176A (235 aa).

Phosphoserine is present on S38. 4 helical membrane-spanning segments follow: residues 55–75 (VASW…GGFF), 86–106 (SGAA…AFIY), 113–133 (YWAL…IAAL), and 193–213 (AMLL…LWLY).

Belongs to the TMEM176 family. As to quaternary structure, interacts with MCOLN2.

The protein localises to the membrane. The protein is Transmembrane protein 176A (TMEM176A) of Homo sapiens (Human).